The following is a 106-amino-acid chain: Large ribosomal subunit protein bL21 (106 aa).

The protein belongs to the bacterial ribosomal protein bL21 family. Part of the 50S ribosomal subunit. Contacts protein L20.

Functionally, this protein binds to 23S rRNA in the presence of protein L20. In Coprothermobacter proteolyticus (strain ATCC 35245 / DSM 5265 / OCM 4 / BT), this protein is Large ribosomal subunit protein bL21.